A 430-amino-acid chain; its full sequence is Palmitoyltransferase ZDHHC11 (430 aa).

Topologically, residues 1 to 46 are cytoplasmic; sequence MTNLNCFGRHRRRTAPHNATGSRSELVAPPIHSRINGWSSPLHSFQ. Residues 47–67 form a helical membrane-spanning segment; sequence FIALLIFSFMAIVAFGIYVPL. The Lumenal segment spans residues 68–76; it reads LPAPWSYAA. A helical transmembrane segment spans residues 77–97; the sequence is YALIGSAFVLHLFSHVTAVTI. The Cytoplasmic portion of the chain corresponds to 98 to 176; that stretch reads DPADVNVRRR…GGRNYWFFFT (79 aa). Positions 129–179 constitute a DHHC domain; the sequence is LHCTLCEVDVSPKAKHCSTCNKCIADFDHHCKWLNNCVGGRNYWFFFTAVS. The active-site S-palmitoyl cysteine intermediate is the Cys-159. A helical transmembrane segment spans residues 177–197; that stretch reads AVSSAVIGVILLIPLVLFVFI. Over 198 to 234 the chain is Lumenal; sequence EHYVNPAVLRTAPQFQTVKGNGTWLVFLPVAPVETSS. The helical transmembrane segment at 235-255 threads the bilayer; it reads ISLLVVSFITALLSLAALLLL. Topologically, residues 256–430 are cytoplasmic; it reads CHLLCFHIYL…QYLHFKQKMP (175 aa).

This sequence belongs to the DHHC palmitoyltransferase family.

It is found in the endoplasmic reticulum membrane. It catalyses the reaction L-cysteinyl-[protein] + hexadecanoyl-CoA = S-hexadecanoyl-L-cysteinyl-[protein] + CoA. Endoplasmic reticulum-localized palmitoyltransferase that could catalyze the addition of palmitate onto protein substrates. The polypeptide is Palmitoyltransferase ZDHHC11 (Danio rerio (Zebrafish)).